The following is a 281-amino-acid chain: Bifunctional protein FolD (281 aa).

NADP(+) is bound by residues Gly-165–Gly-167, Thr-192, and Val-233.

This sequence belongs to the tetrahydrofolate dehydrogenase/cyclohydrolase family. Homodimer.

It carries out the reaction (6R)-5,10-methylene-5,6,7,8-tetrahydrofolate + NADP(+) = (6R)-5,10-methenyltetrahydrofolate + NADPH. The catalysed reaction is (6R)-5,10-methenyltetrahydrofolate + H2O = (6R)-10-formyltetrahydrofolate + H(+). It functions in the pathway one-carbon metabolism; tetrahydrofolate interconversion. Its function is as follows. Catalyzes the oxidation of 5,10-methylenetetrahydrofolate to 5,10-methenyltetrahydrofolate and then the hydrolysis of 5,10-methenyltetrahydrofolate to 10-formyltetrahydrofolate. The polypeptide is Bifunctional protein FolD (Mycobacterium marinum (strain ATCC BAA-535 / M)).